Consider the following 194-residue polypeptide: Protein GrpE (194 aa).

It belongs to the GrpE family. In terms of assembly, homodimer.

The protein resides in the cytoplasm. Functionally, participates actively in the response to hyperosmotic and heat shock by preventing the aggregation of stress-denatured proteins, in association with DnaK and GrpE. It is the nucleotide exchange factor for DnaK and may function as a thermosensor. Unfolded proteins bind initially to DnaJ; upon interaction with the DnaJ-bound protein, DnaK hydrolyzes its bound ATP, resulting in the formation of a stable complex. GrpE releases ADP from DnaK; ATP binding to DnaK triggers the release of the substrate protein, thus completing the reaction cycle. Several rounds of ATP-dependent interactions between DnaJ, DnaK and GrpE are required for fully efficient folding. The sequence is that of Protein GrpE from Aliivibrio salmonicida (strain LFI1238) (Vibrio salmonicida (strain LFI1238)).